The sequence spans 417 residues: MAEIKNYTLNFGPQHPAAHGVLRLVLELDGEVIQRADPHIGLLHRATEKLAEQKTYLQSVPYMDRLDYVSMMCNEHAYVMAIEKMLNIEVPLRAQYIRVMFDEITRILNHLMWLGAHALDVGAMGVFLYAFREREDLMDCYEAVSGARMHAAYYRPGGVYRDLPDTMPQHKASIIRNAKAISQLNENRQGSLLDFIEDFTNRFPTYVDEYETLLTDNRIWKQRLVGIGVVSPERAMAMGFTGAMLRGSGVEWDLRKKQPYEVYDLMDFDIPVGTNGDCYDRYLVRVEEMRQSNRIIKQCVEWLRNNAGPVMTDNHKVAPPSRVGMKSNMEDLIHHFKLFTEGFHVPTGEAYAAVEHPKGEFGVYLISDGANKPYRMKIRAPGFPHLQGLDEMAKGHMIADAVTIIGTQDIVFGEIDR.

It belongs to the complex I 49 kDa subunit family. As to quaternary structure, NDH-1 is composed of 14 different subunits. Subunits NuoB, C, D, E, F, and G constitute the peripheral sector of the complex.

It is found in the cell inner membrane. It carries out the reaction a quinone + NADH + 5 H(+)(in) = a quinol + NAD(+) + 4 H(+)(out). NDH-1 shuttles electrons from NADH, via FMN and iron-sulfur (Fe-S) centers, to quinones in the respiratory chain. The immediate electron acceptor for the enzyme in this species is believed to be ubiquinone. Couples the redox reaction to proton translocation (for every two electrons transferred, four hydrogen ions are translocated across the cytoplasmic membrane), and thus conserves the redox energy in a proton gradient. The protein is NADH-quinone oxidoreductase subunit D of Janthinobacterium sp. (strain Marseille) (Minibacterium massiliensis).